The primary structure comprises 88 residues: Small ribosomal subunit protein eS21 (88 aa).

This sequence belongs to the eukaryotic ribosomal protein eS21 family. In terms of assembly, component of the 40S small ribosomal subunit.

It localises to the cytoplasm. The protein localises to the cytosol. Its subcellular location is the rough endoplasmic reticulum. In Caenorhabditis elegans, this protein is Small ribosomal subunit protein eS21 (rps-21).